A 1640-amino-acid polypeptide reads, in one-letter code: RING finger protein 17 (1640 aa).

Residues 30–73 (CTRCGRKVSVASGDHHKFPCGHAFCELCLLAPQEYTTSKCTDCE) form an RING-type zinc finger. Serine 134 bears the Phosphoserine mark. The residue at position 229 (lysine 229) is an N6-acetyllysine. Disordered regions lie at residues 348 to 376 (TDET…TKEM) and 413 to 435 (DDPI…APVG). Residues 360–373 (APDRHLEGKKKQPT) are compositionally biased toward basic and acidic residues. 2 consecutive Tudor domains span residues 751-809 (CPLQ…FLEP) and 985-1044 (KWEC…LKTM). A compositionally biased stretch (basic and acidic residues) spans 1170 to 1184 (NEHKVPDSKGKKSES). A disordered region spans residues 1170 to 1191 (NEHKVPDSKGKKSESRSTGCYR). Tudor domains lie at 1246-1303 (SWKK…PDTP) and 1496-1556 (DFSS…LMQY).

Interacts with MXD1, MXD3, MXD4, MXI1 and PIWIL1. Self-associates. As to expression, expressed at high levels in adult testis. Expressed in male germ cells (at protein level). Expressed at lower levels in adult thyroid, submaxillary gland, ovary and epididymis.

It is found in the cytoplasm. It localises to the nucleus. Its function is as follows. Seems to be involved in regulation of transcriptional activity of MYC. In vitro, inhibits DNA-binding activity of Mad-MAX heterodimers. Can recruit Mad transcriptional repressors (MXD1, MXD3, MXD4 and MXI1) to the cytoplasm. May be involved in spermiogenesis. This Mus musculus (Mouse) protein is RING finger protein 17 (Rnf17).